Reading from the N-terminus, the 152-residue chain is Lipoprotein signal peptidase (152 aa).

Transmembrane regions (helical) follow at residues 55-75 and 85-105; these read NKMW…VFYM and LGIS…DRVF. Active-site residues include aspartate 111 and aspartate 129. The helical transmembrane segment at 124 to 144 threads the bilayer; it reads VFNIADSALCIGVVLIIIQTL.

This sequence belongs to the peptidase A8 family.

It localises to the cell membrane. It carries out the reaction Release of signal peptides from bacterial membrane prolipoproteins. Hydrolyzes -Xaa-Yaa-Zaa-|-(S,diacylglyceryl)Cys-, in which Xaa is hydrophobic (preferably Leu), and Yaa (Ala or Ser) and Zaa (Gly or Ala) have small, neutral side chains.. It participates in protein modification; lipoprotein biosynthesis (signal peptide cleavage). In terms of biological role, this protein specifically catalyzes the removal of signal peptides from prolipoproteins. The polypeptide is Lipoprotein signal peptidase (Bacillus cereus (strain AH187)).